A 306-amino-acid polypeptide reads, in one-letter code: Phosphatidylserine decarboxylase proenzyme (306 aa).

Catalysis depends on charge relay system; for autoendoproteolytic cleavage activity residues Asp-98, His-155, and Ser-259. Ser-259 (schiff-base intermediate with substrate; via pyruvic acid; for decarboxylase activity) is an active-site residue. Position 259 is a pyruvic acid (Ser); by autocatalysis (Ser-259).

It belongs to the phosphatidylserine decarboxylase family. PSD-B subfamily. Prokaryotic type I sub-subfamily. As to quaternary structure, heterodimer of a large membrane-associated beta subunit and a small pyruvoyl-containing alpha subunit. It depends on pyruvate as a cofactor. Is synthesized initially as an inactive proenzyme. Formation of the active enzyme involves a self-maturation process in which the active site pyruvoyl group is generated from an internal serine residue via an autocatalytic post-translational modification. Two non-identical subunits are generated from the proenzyme in this reaction, and the pyruvate is formed at the N-terminus of the alpha chain, which is derived from the carboxyl end of the proenzyme. The autoendoproteolytic cleavage occurs by a canonical serine protease mechanism, in which the side chain hydroxyl group of the serine supplies its oxygen atom to form the C-terminus of the beta chain, while the remainder of the serine residue undergoes an oxidative deamination to produce ammonia and the pyruvoyl prosthetic group on the alpha chain. During this reaction, the Ser that is part of the protease active site of the proenzyme becomes the pyruvoyl prosthetic group, which constitutes an essential element of the active site of the mature decarboxylase.

The protein resides in the cell membrane. The catalysed reaction is a 1,2-diacyl-sn-glycero-3-phospho-L-serine + H(+) = a 1,2-diacyl-sn-glycero-3-phosphoethanolamine + CO2. It participates in phospholipid metabolism; phosphatidylethanolamine biosynthesis; phosphatidylethanolamine from CDP-diacylglycerol: step 2/2. Catalyzes the formation of phosphatidylethanolamine (PtdEtn) from phosphatidylserine (PtdSer). The sequence is that of Phosphatidylserine decarboxylase proenzyme from Nitrosococcus oceani (strain ATCC 19707 / BCRC 17464 / JCM 30415 / NCIMB 11848 / C-107).